The chain runs to 201 residues: MNVRAALPPCSILLLAGGRGQRMGGRDKGLIEWQGKALIEHLHALTRPLTDDLIISCNRNIERYAQYADQLVKDDDTDFNGPLAGIRAALPRARHQWLLVLPCDGPLVDEPLLRAMREKAFEYPQRPVMVREGQHWQPLLCMIPVACAATLEAAWLAGERSPRRAMEPLQPVAVQLEANDPRLANLNTPCLLAGINENDRK.

GTP is bound by residues L15–G17, K28, D74, and D104. Mg(2+) is bound at residue D104.

Belongs to the MobA family. As to quaternary structure, monomer. It depends on Mg(2+) as a cofactor.

It is found in the cytoplasm. The enzyme catalyses Mo-molybdopterin + GTP + H(+) = Mo-molybdopterin guanine dinucleotide + diphosphate. Transfers a GMP moiety from GTP to Mo-molybdopterin (Mo-MPT) cofactor (Moco or molybdenum cofactor) to form Mo-molybdopterin guanine dinucleotide (Mo-MGD) cofactor. The chain is Molybdenum cofactor guanylyltransferase from Pseudomonas syringae pv. tomato (strain ATCC BAA-871 / DC3000).